The sequence spans 255 residues: Triosephosphate isomerase (255 aa).

9-11 lines the substrate pocket; the sequence is NWK. Residue H95 is the Electrophile of the active site. The Proton acceptor role is filled by E167. Residues G173, S212, and 233 to 234 each bind substrate; that span reads GG.

This sequence belongs to the triosephosphate isomerase family. As to quaternary structure, homodimer.

It is found in the cytoplasm. It carries out the reaction D-glyceraldehyde 3-phosphate = dihydroxyacetone phosphate. It functions in the pathway carbohydrate biosynthesis; gluconeogenesis. The protein operates within carbohydrate degradation; glycolysis; D-glyceraldehyde 3-phosphate from glycerone phosphate: step 1/1. In terms of biological role, involved in the gluconeogenesis. Catalyzes stereospecifically the conversion of dihydroxyacetone phosphate (DHAP) to D-glyceraldehyde-3-phosphate (G3P). The polypeptide is Triosephosphate isomerase (Yersinia pseudotuberculosis serotype O:1b (strain IP 31758)).